The chain runs to 97 residues: Co-chaperonin GroES (97 aa).

It belongs to the GroES chaperonin family. Heptamer of 7 subunits arranged in a ring. Interacts with the chaperonin GroEL.

It is found in the cytoplasm. Its function is as follows. Together with the chaperonin GroEL, plays an essential role in assisting protein folding. The GroEL-GroES system forms a nano-cage that allows encapsulation of the non-native substrate proteins and provides a physical environment optimized to promote and accelerate protein folding. GroES binds to the apical surface of the GroEL ring, thereby capping the opening of the GroEL channel. The polypeptide is Co-chaperonin GroES (Pseudomonas fluorescens (strain ATCC BAA-477 / NRRL B-23932 / Pf-5)).